Consider the following 955-residue polypeptide: Mediator of RNA polymerase II transcription subunit 16 (955 aa).

Residues Ala855 to Gln874 form a disordered region. A compositionally biased stretch (polar residues) spans Pro857–Thr873.

Belongs to the Mediator complex subunit 16 family. As to quaternary structure, component of the Mediator complex.

It localises to the nucleus. Its function is as follows. Component of the Mediator complex, a coactivator involved in the regulated transcription of nearly all RNA polymerase II-dependent genes. Mediator functions as a bridge to convey information from gene-specific regulatory proteins to the basal RNA polymerase II transcription machinery. Mediator is recruited to promoters by direct interactions with regulatory proteins and serves as a scaffold for the assembly of a functional preinitiation complex with RNA polymerase II and the general transcription factors. The sequence is that of Mediator of RNA polymerase II transcription subunit 16 (sin4) from Aspergillus fumigatus (strain ATCC MYA-4609 / CBS 101355 / FGSC A1100 / Af293) (Neosartorya fumigata).